A 24-amino-acid chain; its full sequence is Protein YsdE (24 aa).

The chain is Protein YsdE from Escherichia coli (strain K12).